We begin with the raw amino-acid sequence, 147 residues long: uncharacterized protein (147 aa).

At 1–16 (MDHRAAFGYFSNACFK) the chain is on the extracellular side. The helical transmembrane segment at 17-37 (VMLFSSLLASFASSVAFISLI) threads the bilayer. Over 38–105 (TFSLSSSESP…FEAAFFLLTN (68 aa)) the chain is Cytoplasmic. A helical membrane pass occupies residues 106-126 (EMIFFILYYFFSCLMFFYVAS). The Extracellular segment spans residues 127-147 (ERNTNPKILQTINTKPLYIKN).

It localises to the membrane. This is an uncharacterized protein from Saccharomyces cerevisiae (strain ATCC 204508 / S288c) (Baker's yeast).